A 102-amino-acid chain; its full sequence is Small ribosomal subunit protein uS10 (102 aa).

It belongs to the universal ribosomal protein uS10 family. In terms of assembly, part of the 30S ribosomal subunit.

Functionally, involved in the binding of tRNA to the ribosomes. This is Small ribosomal subunit protein uS10 from Arthrobacter sp. (strain FB24).